A 478-amino-acid chain; its full sequence is MAAGGSGVGGKRSSKSDADSGFLGLRPTSVDPALRRRRRGPRNKKRGWRRLAQEPLGLEVDQFLEDVRLQERTSGGLLSEAPNEKLFFVDTGSKEKGLTKKRTKVQKKSLLLKKPLRVDLILENTSKVPAPKDVLAHQVPNAKKLRRKEQLWEKLAKQGELPREVRRAQARLLNPSATRAKPGPQDTVERPFYDLWASDNPLDRPLVGQDEFFLEQTKKKGVKRPARLHTKPSQAPAVEVAPAGASYNPSFEDHQTLLSAAHEVELQRQKEAEKLERQLALPATEQAATQESTFQELCEGLLEESDGEGEPGQGEGPEAGDAEVCPTPARLATTEKKTEQQRRREKAVHRLRVQQAALRAARLRHQELFRLRGIKAQVALRLAELARRQRRRQARREAEADKPRRLGRLKYQAPDIDVQLSSELTDSLRTLKPEGNILRDRFKSFQRRNMIEPRERAKFKRKYKVKLVEKRAFREIQL.

A compositionally biased stretch (gly residues) spans 1 to 10 (MAAGGSGVGG). Positions 1 to 51 (MAAGGSGVGGKRSSKSDADSGFLGLRPTSVDPALRRRRRGPRNKKRGWRRL) are disordered. A2 is modified (N-acetylalanine). Residue S29 is modified to Phosphoserine. Residues 35 to 49 (RRRRRGPRNKKRGWR) are compositionally biased toward basic residues. Phosphoserine is present on residues S93 and S305. A mediates interaction with CDKN2A/isoform tumor suppressor ARF region spans residues 148–431 (KEQLWEKLAK…SELTDSLRTL (284 aa)). Residues 181-478 (KPGPQDTVER…EKRAFREIQL (298 aa)) are mediates interaction with NF2. The disordered stretch occupies residues 303–344 (EESDGEGEPGQGEGPEAGDAEVCPTPARLATTEKKTEQQRRR). Positions 333–342 (TTEKKTEQQR) are enriched in basic and acidic residues. Residues 342–386 (RRREKAVHRLRVQQAALRAARLRHQELFRLRGIKAQVALRLAELA) form a mediates interaction with human herpesvirus 8 protein ORF16 region. 2 nucleolar localization signal regions span residues 347-395 (AVHR…RQAR) and 396-478 (REAE…EIQL).

Belongs to the NOP53 family. As to quaternary structure, homooligomer. Interacts with PTEN; regulates PTEN phosphorylation and increases its stability. Interacts with RPL11; retains RPL11 into the nucleolus. Interacts with CDKN2A/isoform tumor suppressor ARF; the interaction is direct and promotes ARF nucleoplasmic relocalization and ubiquitin-mediated proteasomal degradation. Interacts with NPM1; the interaction is direct and competitive with MYC. Interacts with NF2 (via FERM domain); the interaction is direct. Interacts with p53/TP53 (via the oligomerization region); the interaction is direct and may prevent the MDM2-mediated proteasomal degradation of p53/TP53. Interacts with RIGI; may regulate RIGI through USP15-mediated 'Lys-63'-linked deubiquitination. Interacts with UBTF. In terms of assembly, (Microbial infection) Interacts with herpes simplex virus 1 early proteins ICP22 and ICP0. (Microbial infection) Interacts with Human herpesvirus 8 protein ORF16; may sequester ORF16 in host nucleolus and reduce its antiapoptotic activity. Ubiquitin-mediated proteasomal degradation is regulated by c-JUN. It is associated with relocalization to the nucleoplasm and decreased homooligomerization. In terms of processing, phosphorylated upon DNA damage probably by ATM and DNA-PK; may regulate NOP53 degradation. Expressed at high levels in heart and pancreas, moderate levels in placenta, liver, skeletal muscle, and kidney, and low levels in brain and lung.

The protein localises to the nucleus. Its subcellular location is the nucleolus. It is found in the nucleoplasm. Functionally, nucleolar protein which is involved in the integration of the 5S RNP into the ribosomal large subunit during ribosome biogenesis. In ribosome biogenesis, may also play a role in rRNA transcription. Also functions as a nucleolar sensor that regulates the activation of p53/TP53 in response to ribosome biogenesis perturbation, DNA damage and other stress conditions. DNA damage or perturbation of ribosome biogenesis disrupt the interaction between NOP53 and RPL11 allowing RPL11 transport to the nucleoplasm where it can inhibit MDM2 and allow p53/TP53 activation. It may also positively regulate the function of p53/TP53 in cell cycle arrest and apoptosis through direct interaction, preventing its MDM2-dependent ubiquitin-mediated proteasomal degradation. Originally identified as a tumor suppressor, it may also play a role in cell proliferation and apoptosis by positively regulating the stability of PTEN, thereby antagonizing the PI3K-AKT/PKB signaling pathway. May also inhibit cell proliferation and increase apoptosis through its interaction with NF2. May negatively regulate NPM1 by regulating its nucleoplasmic localization, oligomerization and ubiquitin-mediated proteasomal degradation. Thereby, may prevent NPM1 interaction with MYC and negatively regulate transcription mediated by the MYC-NPM1 complex. May also regulate cellular aerobic respiration. In the cellular response to viral infection, may play a role in the attenuation of interferon-beta through the inhibition of RIGI. The polypeptide is Ribosome biogenesis protein NOP53 (Homo sapiens (Human)).